A 432-amino-acid chain; its full sequence is 23S rRNA (uracil(1939)-C(5))-methyltransferase RlmD (432 aa).

One can recognise a TRAM domain in the interval M1–A54. C67, C73, C76, and C155 together coordinate [4Fe-4S] cluster. Positions 264, 293, 298, 314, 341, and 362 each coordinate S-adenosyl-L-methionine. The active-site Nucleophile is the C389.

This sequence belongs to the class I-like SAM-binding methyltransferase superfamily. RNA M5U methyltransferase family. RlmD subfamily.

The catalysed reaction is uridine(1939) in 23S rRNA + S-adenosyl-L-methionine = 5-methyluridine(1939) in 23S rRNA + S-adenosyl-L-homocysteine + H(+). Functionally, catalyzes the formation of 5-methyl-uridine at position 1939 (m5U1939) in 23S rRNA. This chain is 23S rRNA (uracil(1939)-C(5))-methyltransferase RlmD, found in Thiobacillus denitrificans (strain ATCC 25259 / T1).